The sequence spans 276 residues: Large ribosomal subunit protein uL2 (276 aa).

The tract at residues 222–276 is disordered; the sequence is GVAMNPIDHPLGGGEGRSSGGRHPVSPWGMPTKGYKTRDRKKASSKLIIKRRGQK. Over residues 259–276 the composition is skewed to basic residues; the sequence is RDRKKASSKLIIKRRGQK.

It belongs to the universal ribosomal protein uL2 family. Part of the 50S ribosomal subunit. Forms a bridge to the 30S subunit in the 70S ribosome.

In terms of biological role, one of the primary rRNA binding proteins. Required for association of the 30S and 50S subunits to form the 70S ribosome, for tRNA binding and peptide bond formation. It has been suggested to have peptidyltransferase activity; this is somewhat controversial. Makes several contacts with the 16S rRNA in the 70S ribosome. The chain is Large ribosomal subunit protein uL2 from Nitratidesulfovibrio vulgaris (strain ATCC 29579 / DSM 644 / CCUG 34227 / NCIMB 8303 / VKM B-1760 / Hildenborough) (Desulfovibrio vulgaris).